The chain runs to 499 residues: Interferon regulatory factor 5 (499 aa).

Positions Pro-12–Lys-18 match the Nuclear localization signal motif. The IRF tryptophan pentad repeat DNA-binding region spans Arg-14–Ser-122. Residues Cys-121–Glu-142 form a disordered region. The short motif at Leu-145–Thr-155 is the Nuclear export signal element. Phosphoserine; by TBK1 is present on residues Ser-153 and Ser-294. Residue Ser-302 is modified to Phosphoserine. Residues Lys-412 and Lys-413 each participate in a glycyl lysine isopeptide (Lys-Gly) (interchain with G-Cter in ubiquitin) cross-link. 5 positions are modified to phosphoserine: Ser-432, Ser-436, Ser-438, Ser-441, and Ser-447.

Belongs to the IRF family. As to quaternary structure, homodimer, when phosphorylated. Interacts with TASL (via pLxIS motif); interaction takes place downstream of TLR7, TLR8 or TLR9, leading to its activation. Interacts with MYD88 and TRAF6. Phosphorylation of serine and threonine residues by IKBKB in a C-terminal autoinhibitory region, stimulates dimerization, transport into the nucleus, assembly with the coactivator CBP/EP300 and initiation of transcription. Post-translationally, 'Lys-63'-linked polyubiquitination by TRAF6 is required for activation.

The protein resides in the cytoplasm. It localises to the nucleus. Its activity is regulated as follows. Maintained as a monomer in an autoinhibited state. Phosphorylation and activation follow the following steps: innate adapter protein TASL recruits IRF5, thereby licensing IRF5 for phosphorylation by IKBKB. Phosphorylated IRF5 dissociates from the adapter proteins, dimerizes, and then enters the nucleus to induce IFNs. In terms of biological role, transcription factor that plays a critical role in innate immunity by activating expression of type I interferon (IFN) IFNA and INFB and inflammatory cytokines downstream of endolysosomal toll-like receptors TLR7, TLR8 and TLR9. Regulates the transcription of type I IFN genes (IFN-alpha and IFN-beta) and IFN-stimulated genes (ISG) by binding to an interferon-stimulated response element (ISRE) in their promoters. Can efficiently activate both the IFN-beta (IFNB) and the IFN-alpha (IFNA) genes and mediate their induction downstream of the TLR-activated, MyD88-dependent pathway. In Bos taurus (Bovine), this protein is Interferon regulatory factor 5.